The primary structure comprises 687 residues: Ribonuclease E (687 aa).

Residues 35-117 enclose the S1 motif domain; sequence GDIYLGVVEN…LTGNITLPGR (83 aa). Mg(2+) is bound by residues Asp-296 and Asp-339. Positions 397 and 400 each coordinate Zn(2+). A disordered region spans residues 650–687; sequence PIKLTETMEESEVNAASTANRRRRRRSSASDSDTGEDS. A C4 Arg-rich motif, necessary and sufficient to confer PNPase binding on another protein motif is present at residues 670-678; that stretch reads RRRRRRSSA.

Belongs to the RNase E/G family. May form homodimers or higher order multimers. Interacts with polynucleotide phosphorylase (PNPase, pnp) via the C4 Arg-rich motif (residues 670-678). A homotetramer formed by a dimer of dimers. Mg(2+) serves as cofactor. Zn(2+) is required as a cofactor.

It localises to the cytoplasm. It carries out the reaction Endonucleolytic cleavage of single-stranded RNA in A- and U-rich regions.. Endoribonuclease that plays a central role in rRNA and tRNA processing and mRNA decay. Has been shown to act on 9S rRNA (the precursor of 5S rRNA). In Nostoc sp. (strain PCC 7120 / SAG 25.82 / UTEX 2576), this protein is Ribonuclease E.